Consider the following 353-residue polypeptide: Photosystem II D2 protein (353 aa).

T2 is subject to N-acetylthreonine. T2 bears the Phosphothreonine mark. A helical membrane pass occupies residues 41–61 (CAYFALGGWFTGTTFVTSWYT). H118 serves as a coordination point for chlorophyll a. Residues 125 to 141 (GFMLRQFELARSVQLRP) traverse the membrane as a helical segment. Pheophytin a is bound by residues Q130 and N143. The helical transmembrane segment at 153-166 (VFVSVFFIYPLGQS) threads the bilayer. Residue H198 coordinates chlorophyll a. Residues 208–228 (AALLCAIHGATVENTLFEDGD) traverse the membrane as a helical segment. The a plastoquinone site is built by H215 and F262. Fe cation is bound at residue H215. H269 provides a ligand contact to Fe cation. A helical transmembrane segment spans residues 279–295 (GLWMSALGVVGLALNLR).

Belongs to the reaction center PufL/M/PsbA/D family. In terms of assembly, PSII is composed of 1 copy each of membrane proteins PsbA, PsbB, PsbC, PsbD, PsbE, PsbF, PsbH, PsbI, PsbJ, PsbK, PsbL, PsbM, PsbT, PsbX, PsbY, PsbZ, Psb30/Ycf12, at least 3 peripheral proteins of the oxygen-evolving complex and a large number of cofactors. It forms dimeric complexes. The D1/D2 heterodimer binds P680, chlorophylls that are the primary electron donor of PSII, and subsequent electron acceptors. It shares a non-heme iron and each subunit binds pheophytin, quinone, additional chlorophylls, carotenoids and lipids. There is also a Cl(-1) ion associated with D1 and D2, which is required for oxygen evolution. The PSII complex binds additional chlorophylls, carotenoids and specific lipids. is required as a cofactor.

The protein resides in the plastid membrane. It carries out the reaction 2 a plastoquinone + 4 hnu + 2 H2O = 2 a plastoquinol + O2. Its function is as follows. Photosystem II (PSII) is a light-driven water:plastoquinone oxidoreductase that uses light energy to abstract electrons from H(2)O, generating O(2) and a proton gradient subsequently used for ATP formation. It consists of a core antenna complex that captures photons, and an electron transfer chain that converts photonic excitation into a charge separation. The D1/D2 (PsbA/PsbD) reaction center heterodimer binds P680, the primary electron donor of PSII as well as several subsequent electron acceptors. D2 is needed for assembly of a stable PSII complex. The polypeptide is Photosystem II D2 protein (Cuscuta exaltata (Tall dodder)).